A 419-amino-acid polypeptide reads, in one-letter code: E3 ubiquitin-protein ligase RNF130 (419 aa).

A signal peptide spans 1-27; sequence MSGAARAGPARLAALALLTCSLWPTRA. Topologically, residues 28–194 are extracellular; that stretch reads DNASQEYYTA…MPPKNFSRGS (167 aa). Residues asparagine 29, asparagine 40, asparagine 112, asparagine 135, asparagine 172, and asparagine 189 are each glycosylated (N-linked (GlcNAc...) asparagine). The 72-residue stretch at 105–176 folds into the PA domain; it reads IALLQRGNCT…SYLEKNISVQ (72 aa). A helical transmembrane segment spans residues 195–217; the sequence is LVFVSISFIVLMIISSAWLIFYF. Residues 218-419 lie on the Cytoplasmic side of the membrane; it reads IQKIRYTNAR…SLNANEVEWF (202 aa). The RING-type zinc-finger motif lies at 264 to 305; sequence CAVCIESYKQNDVVRVLPCKHVFHKSCVDPWLSEHCTCPMCK. The residue at position 341 (serine 341) is a Phosphoserine.

As to expression, in testis sections, expressed in interstitial tissue and seminiferous tubules. In tubules, expression is mainly in postmeiotic germ cells and to a much lesser extent in Sertoli cells (at protein level). Expressed at high levels in liver, lung, stomach, heart and thymus.

Its subcellular location is the membrane. The protein resides in the cytoplasm. It carries out the reaction S-ubiquitinyl-[E2 ubiquitin-conjugating enzyme]-L-cysteine + [acceptor protein]-L-lysine = [E2 ubiquitin-conjugating enzyme]-L-cysteine + N(6)-ubiquitinyl-[acceptor protein]-L-lysine.. It functions in the pathway protein modification; protein ubiquitination. In terms of biological role, acts as an E3 ubiquitin-protein ligase. May have a role during the programmed cell death of hematopoietic cells. The sequence is that of E3 ubiquitin-protein ligase RNF130 from Rattus norvegicus (Rat).